Consider the following 275-residue polypeptide: 3-methyl-2-oxobutanoate hydroxymethyltransferase (275 aa).

The Mg(2+) site is built by Asp-49 and Asp-88. 3-methyl-2-oxobutanoate-binding positions include 49 to 50 (DS), Asp-88, and Lys-118. Glu-120 provides a ligand contact to Mg(2+). Glu-187 acts as the Proton acceptor in catalysis.

Belongs to the PanB family. Homodecamer; pentamer of dimers. The cofactor is Mg(2+).

The protein localises to the cytoplasm. It carries out the reaction 3-methyl-2-oxobutanoate + (6R)-5,10-methylene-5,6,7,8-tetrahydrofolate + H2O = 2-dehydropantoate + (6S)-5,6,7,8-tetrahydrofolate. It functions in the pathway cofactor biosynthesis; (R)-pantothenate biosynthesis; (R)-pantoate from 3-methyl-2-oxobutanoate: step 1/2. Functionally, catalyzes the reversible reaction in which hydroxymethyl group from 5,10-methylenetetrahydrofolate is transferred onto alpha-ketoisovalerate to form ketopantoate. The sequence is that of 3-methyl-2-oxobutanoate hydroxymethyltransferase from Bartonella henselae (strain ATCC 49882 / DSM 28221 / CCUG 30454 / Houston 1) (Rochalimaea henselae).